Consider the following 130-residue polypeptide: Protein ApaG (130 aa).

One can recognise an ApaG domain in the interval 3-127; it reads RALTRDIEVT…FSLDSPGLMR (125 aa).

This is Protein ApaG from Agrobacterium fabrum (strain C58 / ATCC 33970) (Agrobacterium tumefaciens (strain C58)).